The primary structure comprises 251 residues: Small ribosomal subunit protein uS3 (251 aa).

The 74-residue stretch at 39–112 (IRKYINEVYA…NIILNVVEVR (74 aa)) folds into the KH type-2 domain. The segment at 222 to 251 (EEKKPAKKFNKKPVAAKPANKEEKSSKEVK) is disordered. Positions 240 to 251 (ANKEEKSSKEVK) are enriched in basic and acidic residues.

The protein belongs to the universal ribosomal protein uS3 family. As to quaternary structure, part of the 30S ribosomal subunit. Forms a tight complex with proteins S10 and S14.

Its function is as follows. Binds the lower part of the 30S subunit head. Binds mRNA in the 70S ribosome, positioning it for translation. In Anaeroplasma abactoclasticum, this protein is Small ribosomal subunit protein uS3.